Reading from the N-terminus, the 401-residue chain is MAELHASLPITLRCGLTLPNRLVKASMSEGISAAGSLPDMKIRNIYQRWAKGGWGMVITGNVQVDDRYLGTANDLAVDSRASDDTIVASWSRWAKVCRQHGTPTLVQLNHPGRQCPIGAGTHGYLSKNVAPTSIGLHMGDGLIPKAVSAIAFGKPRELEIAEIRTITQQFARAARLAYRSGFAGVEIHAAHGYLIDEFLTERTNRRSDAYGGSTERRAKFLIDIISAVRSEVPSSFCVGVTINSVDSVFPEILVDRVRQLELVTSAGVDFIEISGGTFEDPLMFLGPPKPSSSANMEHSEAYFVDFAKVVASKFPDVPLLLTGGFRCRESIEKAVTNGACSMVGIARPAAVNPLLPKTVMFNHEVKDSDATLYSPKIEAPWLIRQMGITALSVHMDNVSSF.

Residues 25–28 (ASMS) and Gln107 each bind FMN. 188-191 (HAAH) lines the substrate pocket. 346–347 (AR) contacts FMN.

This sequence belongs to the NADH:flavin oxidoreductase/NADH oxidase family.

Its function is as follows. NADH-dependent flavin oxidoreductase; part of the gene cluster that mediates the biosynthesis of ilicicolin H, a 4-hydroxy-2-pyridonealkaloid that has potent and broad antifungal activities by inhibiting the mitochondrial respiration chain. The biosynthesis of ilicicolin H starts with formation of the tetramic acid by the hybrid PKS-NRPS synthetase iliA with the partnering trans-enoyl reductase iliB since iliA lacks a designated enoylreductase (ER) domain. The cytochrome P450 monooxygenase iliC then catalyzes the ring expansion of the tetramate to the acyclic 2-pyridone. The pericyclase iliD further converts the acyclic 2-pyridone into 8-epi-ilicicolin H. 8-epi-ilicicolin H might then spontaneously convert to ilicicolin H since ilicicolin H is produced in the absence of the epimerase iliE, in contrast to what was observed for the Talaromyces variabilis ilicolin H biosynthetic pathway. The protein is NADH-dependent flavin oxidoreductase iliE of Hypocrea jecorina (strain QM6a) (Trichoderma reesei).